The primary structure comprises 426 residues: Gamma-glutamyl phosphate reductase (426 aa).

This sequence belongs to the gamma-glutamyl phosphate reductase family.

It is found in the cytoplasm. The catalysed reaction is L-glutamate 5-semialdehyde + phosphate + NADP(+) = L-glutamyl 5-phosphate + NADPH + H(+). It participates in amino-acid biosynthesis; L-proline biosynthesis; L-glutamate 5-semialdehyde from L-glutamate: step 2/2. Functionally, catalyzes the NADPH-dependent reduction of L-glutamate 5-phosphate into L-glutamate 5-semialdehyde and phosphate. The product spontaneously undergoes cyclization to form 1-pyrroline-5-carboxylate. This chain is Gamma-glutamyl phosphate reductase, found in Ralstonia pickettii (strain 12J).